We begin with the raw amino-acid sequence, 143 residues long: Hemoglobin subunit alpha-A (143 aa).

The Globin domain occupies 2-143; sequence SLSGKDKSVV…LALALAERYR (142 aa). His60 serves as a coordination point for O2. His89 is a heme b binding site.

This sequence belongs to the globin family. As to quaternary structure, heterotetramer of two alpha chains and two beta chains. Red blood cells.

In terms of biological role, involved in oxygen transport from gills to the various peripheral tissues. This is Hemoglobin subunit alpha-A (hbaa) from Seriola quinqueradiata (Five-ray yellowtail).